A 422-amino-acid polypeptide reads, in one-letter code: Dipeptidase aclJ (422 aa).

The chain crosses the membrane as a helical span at residues 28-45 (LAYSVTLTLVALFFTFAL). Zn(2+) is bound by residues H77 and D79. N-linked (GlcNAc...) asparagine glycosylation occurs at N96. Cysteines 128 and 219 form a disulfide. E190 contributes to the Zn(2+) binding site. H217 provides a ligand contact to substrate. N270 is a glycosylation site (N-linked (GlcNAc...) asparagine). C287 and C319 are joined by a disulfide. Substrate contacts are provided by R291 and D351.

It belongs to the metallo-dependent hydrolases superfamily. Peptidase M19 family. Zn(2+) is required as a cofactor.

The protein localises to the membrane. It catalyses the reaction an L-aminoacyl-L-amino acid + H2O = 2 an L-alpha-amino acid. The protein operates within mycotoxin biosynthesis. Its function is as follows. Dipeptidase; part of the gene cluster that mediates the biosynthesis of aspirochlorine (or antibiotic A30641), an unusual halogenated spiro compound with distinctive antifungal properties due to selective inhibition of protein biosynthesis, and which is also active against bacteria, viruses, and murine tumor cells. The non-ribosomal peptide synthetase (NRPS) aclP is responsible the formation of the diketopiperazine (DKP) core from the condensation of 2 phenylalanine residues. One Phe residue is tailored into chlorotyrosine by hydroxylation and chlorination, whereas the second Phe undergoes an unprecedented C-C bond cleavage to be converted into glycine. After formation of the DKP, sulfur is incorporated into the DKP by conjugation with glutathione by aclG, followed by its stepwise degradation to the thiol by aclI, aclJ and aclK, and the dithiol oxidation by aclT. In addition, oxygenases (aclB, aclC, aclL and aclO) and O-methyltransferases (aclM and aclU) act as tailoring enzymes to produce the intermediate dechloroaspirochlorine. Ultimately, chlorination of dechloroaspirochlorine by the halogenase aclH is the last step in the aspirochlorine pathway. The polypeptide is Dipeptidase aclJ (Aspergillus oryzae (strain ATCC 42149 / RIB 40) (Yellow koji mold)).